A 214-amino-acid polypeptide reads, in one-letter code: Large ribosomal subunit protein uL1 (214 aa).

Belongs to the universal ribosomal protein uL1 family. In terms of assembly, component of the large ribosomal subunit.

Its subcellular location is the cytoplasm. Component of the large ribosomal subunit. The ribosome is a large ribonucleoprotein complex responsible for the synthesis of proteins in the cell. The sequence is that of Large ribosomal subunit protein uL1 (RPL10A) from Entamoeba histolytica (strain ATCC 30459 / HM-1:IMSS / ABRM).